The following is a 299-amino-acid chain: Sodium/potassium-transporting ATPase subunit beta-2 (299 aa).

Residues 1–36 are Cytoplasmic-facing; the sequence is MAALTQKKTCSQMMEEWKEFMWNPRTREFMGRTGSS. Residues 37 to 57 form a helical; Signal-anchor for type II membrane protein membrane-spanning segment; that stretch reads WALILLFYVVFYAFLTAVFSL. Over 58–299 the chain is Extracellular; sequence SLWVMLQTID…VIFTMKIDRL (242 aa). N-linked (GlcNAc...) asparagine glycans are attached at residues Asn-101 and Asn-119. Intrachain disulfides connect Cys-130/Cys-152 and Cys-162/Cys-178. Asn-199, Asn-226, Asn-247, and Asn-259 each carry an N-linked (GlcNAc...) asparagine glycan. Cysteines 206 and 270 form a disulfide.

Belongs to the X(+)/potassium ATPases subunit beta family. The sodium/potassium-transporting ATPase is composed of a catalytic alpha subunit, an auxiliary non-catalytic beta subunit and an additional regulatory subunit. Expressed at a high level in bladder epithelial cells and eye and at a trace level in kidney; it is not detectable in significant amounts in the stomach, colon and small intestine.

Its subcellular location is the cell membrane. Functionally, this is the non-catalytic component of the active enzyme, which catalyzes the hydrolysis of ATP coupled with the exchange of Na(+) and K(+) ions across the plasma membrane. The exact function of this glycoprotein is not known. Some specific sequence of the beta subunit can modulate the activation of the Na,K-pump by extracellular potassium ions. The protein is Sodium/potassium-transporting ATPase subunit beta-2 of Rhinella marina (Cane toad).